Here is a 305-residue protein sequence, read N- to C-terminus: Superkiller complex protein 8 (305 aa).

WD repeat units follow at residues 14–57 (AHED…LELQ), 62–101 (GHQLGVVSVDVSPSGNIMASSSLDAHIRLWDLESGKQIRA), 104–143 (AGPVDAWSVAFSPDSQHLATGSHVGKVNIFGVETGKKEYS), 146–187 (TRGK…HTLE), 188–227 (GHAMPIRSLTFSPDSQLLVTASDDGYIKIYEVQHASLAAT), 230–269 (GHGSWVLNVAFSPDDTHFVSSSSDKSVKVWDVSARTCVHT), and 272–305 (DHQDQVWGVKYNKNGSKIVSVADDQEIHVYDCPI).

Belongs to the SKI8 family. In terms of assembly, component of the PAF1 complex. Component of the SKI complex.

The protein localises to the nucleus. It is found in the cytoplasm. Component of the PAF1 complex (PAF1C) which has multiple functions during transcription by RNA polymerase II and is implicated in regulation of development and maintenance of embryonic stem cell pluripotency. PAF1C associates with RNA polymerase II through interaction with POLR2A CTD non-phosphorylated and 'Ser-2'- and 'Ser-5'-phosphorylated forms and is involved in transcriptional elongation, acting both independently and synergistically with TCEA1 and in cooperation with the DSIF complex and HTATSF1. Also acts as a component of the SKI complex, a multiprotein complex that assists the RNA-degrading exosome during the mRNA decay and quality-control pathways. The SKI complex catalyzes mRNA extraction from 80S ribosomal complexes in the 3'-5' direction and channels mRNA to the cytosolic exosome for degradation. This chain is Superkiller complex protein 8 (skic8), found in Xenopus tropicalis (Western clawed frog).